The sequence spans 724 residues: 1,4-alpha-glucan branching enzyme GlgB 1 (724 aa).

The Nucleophile role is filled by D403. The Proton donor role is filled by E456.

This sequence belongs to the glycosyl hydrolase 13 family. GlgB subfamily. As to quaternary structure, monomer.

It carries out the reaction Transfers a segment of a (1-&gt;4)-alpha-D-glucan chain to a primary hydroxy group in a similar glucan chain.. Its pathway is glycan biosynthesis; glycogen biosynthesis. Functionally, catalyzes the formation of the alpha-1,6-glucosidic linkages in glycogen by scission of a 1,4-alpha-linked oligosaccharide from growing alpha-1,4-glucan chains and the subsequent attachment of the oligosaccharide to the alpha-1,6 position. This chain is 1,4-alpha-glucan branching enzyme GlgB 1, found in Xanthomonas campestris pv. campestris (strain 8004).